A 307-amino-acid chain; its full sequence is MINKDIYQALQQLIPNEKIKVDEPLKRYTYTKTGGNADFYITPTKNEEVQAVVKYAYQNEIPVTYLGNGSNIIIREGGIRGIVISLLSLDHIEVSDDAIIAGSGAAIIDVSRVARDYALTGLEFACGIPGSIGGAVYMNAGAYGGEVKDCIDYALCVNEQGSLIKLTTKELELDYRNSIIQKEHLVVLEAAFTLAPGKMTEIQAKMDDLTERRESKQPLEYPSCGSVFQRPPGHFAGKLIQDSNLQGHRIGGVEVSTKHAGFMVNVDNGTATDYENLIHYVQKTVKEKFGIELNREVRIIGEHPKES.

The 165-residue stretch at 33 to 197 folds into the FAD-binding PCMH-type domain; that stretch reads TGGNADFYIT…LEAAFTLAPG (165 aa). The active site involves arginine 176. The active-site Proton donor is serine 226. The active site involves glutamate 296.

It belongs to the MurB family. FAD is required as a cofactor.

The protein localises to the cytoplasm. It catalyses the reaction UDP-N-acetyl-alpha-D-muramate + NADP(+) = UDP-N-acetyl-3-O-(1-carboxyvinyl)-alpha-D-glucosamine + NADPH + H(+). It functions in the pathway cell wall biogenesis; peptidoglycan biosynthesis. In terms of biological role, cell wall formation. This is UDP-N-acetylenolpyruvoylglucosamine reductase from Staphylococcus aureus (strain NCTC 8325 / PS 47).